A 158-amino-acid polypeptide reads, in one-letter code: C-type lectin galactose-binding isoform (158 aa).

A signal peptide spans 1-20 (MGRFLLVTLSLLVVAFSLNG). 3 disulfides stabilise this stretch: Cys-26–Cys-37, Cys-54–Cys-154, and Cys-129–Cys-146. The 123-residue stretch at 33–155 (KNGYCYKVFK…CTALRPFLCQ (123 aa)) folds into the C-type lectin domain. Ca(2+)-binding residues include Gln-119, Asp-121, Glu-127, Asn-142, and Asp-143. Positions 119–121 (QPD) match the Galactose-binding motif.

This sequence belongs to the true venom lectin family. In terms of assembly, homodimer; disulfide-linked. As to expression, expressed by the venom gland.

Its subcellular location is the secreted. Functionally, galactose-binding lectin that binds to and agglutinates erythrocytes in a calcium-dependent manner. This chain is C-type lectin galactose-binding isoform, found in Hoplocephalus stephensii (Stephens's banded snake).